A 176-amino-acid polypeptide reads, in one-letter code: Lipoprotein signal peptidase (176 aa).

3 helical membrane passes run 12 to 32 (WYWV…WVLT), 67 to 87 (WQKW…TIWL), and 94 to 114 (VWRL…NLID). Residues aspartate 123 and aspartate 141 contribute to the active site. A helical transmembrane segment spans residues 133–153 (HFAAFNIADSAICIGAGLIIL).

The protein belongs to the peptidase A8 family.

The protein resides in the cell inner membrane. It catalyses the reaction Release of signal peptides from bacterial membrane prolipoproteins. Hydrolyzes -Xaa-Yaa-Zaa-|-(S,diacylglyceryl)Cys-, in which Xaa is hydrophobic (preferably Leu), and Yaa (Ala or Ser) and Zaa (Gly or Ala) have small, neutral side chains.. Its pathway is protein modification; lipoprotein biosynthesis (signal peptide cleavage). This protein specifically catalyzes the removal of signal peptides from prolipoproteins. The sequence is that of Lipoprotein signal peptidase from Shewanella sediminis (strain HAW-EB3).